Here is an 88-residue protein sequence, read N- to C-terminus: Putative regulatory protein DvMF_1139 (88 aa).

The protein belongs to the RemA family.

This is Putative regulatory protein DvMF_1139 from Nitratidesulfovibrio vulgaris (strain DSM 19637 / Miyazaki F) (Desulfovibrio vulgaris).